The chain runs to 203 residues: Coupling of ubiquitin conjugation to ER degradation protein 1 (203 aa).

Residues 1-6 (MEDSRL) lie on the Lumenal side of the membrane. The chain crosses the membrane as a helical span at residues 7-23 (LITLILVFGVIFLKKFF). The Cytoplasmic portion of the chain corresponds to 24–203 (QSNQHPSAQR…SDKDLQSLLT (180 aa)). The interval 36-61 (ATGVNAHGRPQGSTQNALRRTGRVNG) is disordered. The 43-residue stretch at 65-107 (VTTQMVETVQNLAPNLHPEQIRYSLENTGSVEETVERYLRGDE) folds into the CUE domain.

The protein belongs to the CUE1 family. In terms of assembly, forms a heterodimer with UBC7. Interacts with SSM4/DOA10 and UBX2/SEL1.

Its subcellular location is the endoplasmic reticulum membrane. Functionally, component of the endoplasmic reticulum-associated protein degradation (ERAD) pathway. Recruits the soluble ubiquitin-conjugating enzyme UBC7 to the cytoplasmic face of the endoplasmic reticulum membrane where it functions in degradation of misfolded or regulated proteins localized in the endoplasmic reticulum (ER) lumen or membrane via the ubiquitin-proteasome system. Targets the E2 conjugating enzyme UBC7 to the DOA10 ubiquitin ligase complex, which is part of the ERAD-C pathway responsible for the rapid degradation of membrane proteins with misfolded cytoplasmic domains, and to the HRD1 ubiquitin ligase complex, which is part of the ERAD-L and ERAD-M pathways responsible for the rapid degradation of soluble lumenal and membrane proteins with misfolded lumenal domains (ERAD-L), or ER-membrane proteins with misfolded transmembrane domains (ERAD-M). Also has a role in cold adaptation, perhaps through effects on sterol biosynthesis. This chain is Coupling of ubiquitin conjugation to ER degradation protein 1 (CUE1), found in Saccharomyces cerevisiae (strain ATCC 204508 / S288c) (Baker's yeast).